The primary structure comprises 148 residues: Large ribosomal subunit protein bL9 (148 aa).

This sequence belongs to the bacterial ribosomal protein bL9 family.

Its function is as follows. Binds to the 23S rRNA. This Pseudomonas aeruginosa (strain LESB58) protein is Large ribosomal subunit protein bL9.